The sequence spans 284 residues: L-ribulose-5-phosphate 3-epimerase UlaE (284 aa).

The protein belongs to the L-ribulose-5-phosphate 3-epimerase family.

It catalyses the reaction L-ribulose 5-phosphate = L-xylulose 5-phosphate. It participates in cofactor degradation; L-ascorbate degradation; D-xylulose 5-phosphate from L-ascorbate: step 3/4. Catalyzes the isomerization of L-xylulose-5-phosphate to L-ribulose-5-phosphate. Is involved in the anaerobic L-ascorbate utilization. The protein is L-ribulose-5-phosphate 3-epimerase UlaE of Escherichia coli O139:H28 (strain E24377A / ETEC).